Consider the following 189-residue polypeptide: GTPase NRas (189 aa).

Residues 10 to 18 (GAGGVGKSA) and 29 to 30 (VD) each bind GTP. The short motif at 32 to 40 (YDPTIEDSY) is the Effector region element. (Microbial infection) O-linked (Glc) threonine; by P.sordellii toxin TcsL glycosylation is present at Thr35. GTP is bound at residue 57–61 (DTAGQ). At Ser89 the chain carries Phosphoserine. GTP is bound at residue 116 to 119 (NKCD). The segment at 166–185 (YRMKKLNSSDDGTQGCMGLP) is hypervariable region. Lys170 is covalently cross-linked (Glycyl lysine isopeptide (Lys-Gly) (interchain with G-Cter in ubiquitin)). The S-palmitoyl cysteine moiety is linked to residue Cys181. A lipid anchor (S-farnesyl cysteine) is attached at Cys186. Positions 187–189 (VVM) are cleaved as a propeptide — removed in mature form.

Belongs to the small GTPase superfamily. Ras family. As to quaternary structure, interacts (active GTP-bound form preferentially) with RGS14. Interacts (active GTP-bound form) with RASSF7. Interacts (active GTP-bound form) with both SHOC2 and PP1c (all isoforms) to form a tertiary complex; SHOC2 and PP1c preferably bind M-Ras/MRAS, but they also bind K-Ras/KRAS, N-Ras/NRAS and H-Ras/HRAS. In terms of processing, palmitoylated by the ZDHHC9-GOLGA7 complex. Depalmitoylated by ABHD17A, ABHD17B and ABHD17C. A continuous cycle of de- and re-palmitoylation regulates rapid exchange between plasma membrane and Golgi. Post-translationally, acetylation at Lys-104 prevents interaction with guanine nucleotide exchange factors (GEFs). Fatty-acylated at Lys-169 and/or Lys-170. In terms of processing, ubiquitinated by the BCR(LZTR1) E3 ubiquitin ligase complex at Lys-170 in a non-degradative manner, leading to inhibit Ras signaling by decreasing Ras association with membranes. Post-translationally, phosphorylation at Ser-89 enhances NRAS association with its downstream effectors. (Microbial infection) Glucosylated at Thr-35 by P.sordellii toxin TcsL.

It localises to the cell membrane. It is found in the golgi apparatus membrane. The enzyme catalyses GTP + H2O = GDP + phosphate + H(+). Its activity is regulated as follows. Alternates between an inactive form bound to GDP and an active form bound to GTP. Activated by a guanine nucleotide-exchange factor (GEF) and inactivated by a GTPase-activating protein (GAP). Functionally, ras proteins bind GDP/GTP and possess intrinsic GTPase activity. The polypeptide is GTPase NRas (NRAS) (Homo sapiens (Human)).